The following is a 181-amino-acid chain: Inner membrane-spanning protein YciB (181 aa).

Helical transmembrane passes span 10–30 (LVIFFAVYKFFDIYIASGALI), 50–70 (MHLITFAMVSVFGSLTLILHD), 80–100 (IVYALFAIALAVSQFMNKPIL), 118–138 (VTWYWVLFFVVCGLVNIYVAF), and 148–168 (FKVFGLTALTLINTVLTVFYL).

The protein belongs to the YciB family.

The protein localises to the cell inner membrane. In terms of biological role, plays a role in cell envelope biogenesis, maintenance of cell envelope integrity and membrane homeostasis. This Shewanella piezotolerans (strain WP3 / JCM 13877) protein is Inner membrane-spanning protein YciB.